The chain runs to 77 residues: MIEASVFMTNRSQAVRLPAEVRFSEEIKKLSVRVSGSDRILSPLNQSWDSFFLNDQAVSDDFMNEREIAFQPEREAL.

The region spanning 4–46 (ASVFMTNRSQAVRLPAEVRFSEEIKKLSVRVSGSDRILSPLNQ) is the SpoVT-AbrB domain.

This sequence belongs to the VapB family. Probably forms a complex with cognate toxin VapC2.

Antitoxin component of a type II toxin-antitoxin (TA) system. Neutralizes the effect of cognate toxin VapC2 but not non-cognate toxin VapC2. The sequence is that of Antitoxin VapB2 from Haemophilus influenzae (strain 86-028NP).